The primary structure comprises 447 residues: Phosphoglucosamine mutase (447 aa).

Residue Ser102 is the Phosphoserine intermediate of the active site. Residues Ser102, Asp241, Asp243, and Asp245 each coordinate Mg(2+). Ser102 carries the phosphoserine modification.

Belongs to the phosphohexose mutase family. It depends on Mg(2+) as a cofactor. In terms of processing, activated by phosphorylation.

The enzyme catalyses alpha-D-glucosamine 1-phosphate = D-glucosamine 6-phosphate. In terms of biological role, catalyzes the conversion of glucosamine-6-phosphate to glucosamine-1-phosphate. The chain is Phosphoglucosamine mutase from Symbiobacterium thermophilum (strain DSM 24528 / JCM 14929 / IAM 14863 / T).